The following is a 326-amino-acid chain: Probable GTP 3',8-cyclase (326 aa).

A Radical SAM core domain is found at 6-235; that stretch reads LYGRPVLSLR…NRPRYIIRTQ (230 aa). R15 is a GTP binding site. C22, C26, and C29 together coordinate [4Fe-4S] cluster. K62 is a binding site for GTP. Residue G66 coordinates S-adenosyl-L-methionine. Position 92 (T92) interacts with GTP. S116 is an S-adenosyl-L-methionine binding site. K153 contributes to the GTP binding site. [4Fe-4S] cluster contacts are provided by C253 and C256. 258-260 lines the GTP pocket; it reads RLR. [4Fe-4S] cluster is bound at residue C270.

It belongs to the radical SAM superfamily. MoaA family. [4Fe-4S] cluster serves as cofactor.

The enzyme catalyses GTP + AH2 + S-adenosyl-L-methionine = (8S)-3',8-cyclo-7,8-dihydroguanosine 5'-triphosphate + 5'-deoxyadenosine + L-methionine + A + H(+). It functions in the pathway cofactor biosynthesis; molybdopterin biosynthesis. Functionally, catalyzes the cyclization of GTP to (8S)-3',8-cyclo-7,8-dihydroguanosine 5'-triphosphate. This chain is Probable GTP 3',8-cyclase, found in Thermoplasma volcanium (strain ATCC 51530 / DSM 4299 / JCM 9571 / NBRC 15438 / GSS1).